The chain runs to 640 residues: Threonine--tRNA ligase (640 aa).

The 61-residue stretch at 1 to 61 (MPIITLPNGD…TEDSTLQIIT (61 aa)) folds into the TGS domain. Positions 242-533 (DHRKIGKALD…LIEHYAGFMP (292 aa)) are catalytic. Zn(2+)-binding residues include C333, H384, and H510.

This sequence belongs to the class-II aminoacyl-tRNA synthetase family. Homodimer. The cofactor is Zn(2+).

Its subcellular location is the cytoplasm. The catalysed reaction is tRNA(Thr) + L-threonine + ATP = L-threonyl-tRNA(Thr) + AMP + diphosphate + H(+). Its function is as follows. Catalyzes the attachment of threonine to tRNA(Thr) in a two-step reaction: L-threonine is first activated by ATP to form Thr-AMP and then transferred to the acceptor end of tRNA(Thr). Also edits incorrectly charged L-seryl-tRNA(Thr). In Acinetobacter baumannii (strain AB0057), this protein is Threonine--tRNA ligase.